A 712-amino-acid polypeptide reads, in one-letter code: Nucleolin (712 aa).

Residues 1 to 305 (MVKLAKAGKN…KKQKVEGTEP (305 aa)) form a disordered region. An N6-acetyllysine mark is found at lysine 9, lysine 15, and lysine 16. Positions 24–43 (VEEDSEDEEMSEDEEDDSSG) are enriched in acidic residues. Phosphoserine is present on residues serine 28, serine 34, serine 41, and serine 42. Residues 56 to 107 (AAATSAKKVVVSPTKKVAVATPAKKAAVTPGKKAAATPAKKTVTPAKAVTTP) are compositionally biased toward low complexity. Residues 58 to 65 (ATSAKKVV) form repeat 1. Residues 58-135 (ATSAKKVVVS…GAAIPAKGAK (78 aa)) are 8 X 8 AA tandem repeats of X-T-P-X-K-K-X-X. At serine 67 the chain carries Phosphoserine. Residues threonine 69, threonine 76, threonine 84, and threonine 92 each carry the phosphothreonine modification. A run of 3 repeats spans residues 75-82 (ATPAKKAA), 83-90 (VTPGKKAA), and 91-98 (ATPAKKTV). Lysine 96 carries the N6-acetyllysine modification. Threonine 99 is modified (phosphothreonine). The 5; truncated repeat unit spans residues 99–104 (TPAKAV). Position 102 is an N6-acetyllysine (lysine 102). The stretch at 105–112 (TTPGKKGA) is repeat 6. At threonine 106 the chain carries Phosphothreonine. Lysine 109 is modified (N6-acetyllysine). At threonine 113 the chain carries Phosphothreonine. At lysine 116 the chain carries N6-acetyllysine. Tandem repeats lie at residues 120–127 (ATPGKKGA) and 128–135 (AIPAKGAK). The residue at position 121 (threonine 121) is a Phosphothreonine. Residues 122 to 137 (PGKKGAAIPAKGAKNG) show a composition bias toward low complexity. Lysine 124 bears the N6-acetyllysine mark. A phosphoserine mark is found at serine 145 and serine 153. Residues 145-171 (SDEEEEDDSEEDEDDDEDEDEDEDEIE) are compositionally biased toward acidic residues. The span at 172–183 (PAAMKAAAAAPA) shows a compositional bias: low complexity. Serine 184 and serine 206 each carry phosphoserine. Acidic residues predominate over residues 184 to 211 (SEDEDDEDDEDDEDEDDDEEDDSEEEAM). Threonine 214 bears the Phosphothreonine mark. Residues 234–274 (EDEDEEEDDEDEDDDDDDDDDDEDDEDEDDEEEEEEEEEEP) show a composition bias toward acidic residues. The segment covering 275–302 (VKEAPGKRKKEMAKQKAAPEAKKQKVEG) has biased composition (basic and acidic residues). Lysine 299 is covalently cross-linked (Glycyl lysine isopeptide (Lys-Gly) (interchain with G-Cter in SUMO1); alternate). Residue lysine 299 forms a Glycyl lysine isopeptide (Lys-Gly) (interchain with G-Cter in SUMO2); alternate linkage. Residue threonine 303 is modified to Phosphothreonine. RRM domains lie at 309 to 385 (FNLF…KPKG) and 395 to 468 (RTLL…YTGE). Lysine 320 bears the N6-acetyllysine mark. Lysine 326 participates in a covalent cross-link: Glycyl lysine isopeptide (Lys-Gly) (interchain with G-Cter in SUMO1); alternate. Residue lysine 326 forms a Glycyl lysine isopeptide (Lys-Gly) (interchain with G-Cter in SUMO2); alternate linkage. Lysine 350 bears the N6-acetyllysine mark. Serine 358 carries the post-translational modification Phosphoserine. Threonine 369 carries the phosphothreonine modification. Lysine 372 participates in a covalent cross-link: Glycyl lysine isopeptide (Lys-Gly) (interchain with G-Cter in SUMO2). Lysine 379 participates in a covalent cross-link: Glycyl lysine isopeptide (Lys-Gly) (interchain with G-Cter in SUMO2); alternate. Position 379 is an N6-acetyllysine; alternate (lysine 379). Lysine 400 and lysine 405 each carry N6-acetyllysine. A Phosphothreonine modification is found at threonine 407. Lysine 429 and lysine 446 each carry N6-acetyllysine. Phosphoserine is present on residues serine 460 and serine 462. N6-acetyllysine occurs at positions 469 and 479. The region spanning 488–562 (KTLVLSNLSY…RAIRLELQGP (75 aa)) is the RRM 3 domain. Lysine 515 is covalently cross-linked (Glycyl lysine isopeptide (Lys-Gly) (interchain with G-Cter in SUMO2); alternate). Position 515 is an N6-acetyllysine; alternate (lysine 515). Lysine 523 is modified (N6-acetyllysine). The residue at position 565 (serine 565) is a Phosphoserine. Lysine 574 carries the post-translational modification N6-acetyllysine. Residues 574 to 649 (KTLFVKGLSE…NKVTLDWAKP (76 aa)) enclose the RRM 4 domain. Residue lysine 579 forms a Glycyl lysine isopeptide (Lys-Gly) (interchain with G-Cter in SUMO2); alternate linkage. Lysine 579 is modified (N6-acetyllysine; alternate). A Phosphoserine modification is found at serine 582. Residue lysine 591 forms a Glycyl lysine isopeptide (Lys-Gly) (interchain with G-Cter in SUMO1); alternate linkage. Lysine 591 participates in a covalent cross-link: Glycyl lysine isopeptide (Lys-Gly) (interchain with G-Cter in SUMO2); alternate. Phosphoserine occurs at positions 593 and 621. A Glycyl lysine isopeptide (Lys-Gly) (interchain with G-Cter in SUMO2) cross-link involves residue lysine 626. The disordered stretch occupies residues 642–712 (VTLDWAKPKG…KPQGKKTKFE (71 aa)). Position 648 is an N6-acetyllysine (lysine 648). Over residues 652 to 698 (EGGFGGRGGGRGGFGGRGGGRGGRGGFGGRGRGGFGGRGGFRGGRGG) the composition is skewed to gly residues. Asymmetric dimethylarginine occurs at positions 658, 662, 668, 672, 675, 681, 683, 689, and 693. Arginine 696 bears the Asymmetric dimethylarginine; alternate mark. Arginine 696 is modified (omega-N-methylarginine; alternate). The span at 699–712 (GGDHKPQGKKTKFE) shows a compositional bias: basic and acidic residues.

Identified in a IGF2BP1-dependent mRNP granule complex containing untranslated mRNAs. Component of the SWAP complex that consists of NPM1, NCL/nucleolin, PARP1 and SWAP70. Component of a complex which is at least composed of HTATSF1/Tat-SF1, the P-TEFb complex components CDK9 and CCNT1, RNA polymerase II, SUPT5H, and NCL/nucleolin. Interacts with AICDA. Interacts with APTX. Interacts with C1QBP. Interacts with ERBB4. Interacts (via C-terminus) with FMR1 isoform 6 (via N-terminus). Interacts with GZF1; this interaction is important for nucleolar localization of GZF1. Interacts with NSUN2. Interacts with NVL. Interacts (via N-terminus domain) with SETX. Interacts (via RRM1 and C-terminal RRM4/Arg/Gly-rich domains) with TERT; the interaction is important for nucleolar localization of TERT. Interacts with WDR46. Interacts with ZFP36. Interacts with LRRC34. Interacts with RRP1B. Interacts with HNRNPU; this interaction occurs during mitosis. Interacts with RIOK1; RIOK1 recruits NCL to the PRMT5 for symmetrically methylation. Interacts with ZBTB7B. Interacts with MDK; this interaction promotes NCL clustering and lateral movements of this complex into lipid rafts leading to MDK internalization. Interacts with HDGF. Interacts with ALKBH2. Interacts with IGFBP5; this interaction is necessary for IGFBP5 localization to the nucleus. Interacts with DDX24 (when ubiquitinated); this interaction may be important during ribosome biogenesis. In terms of processing, some glutamate residues are glycylated by TTLL8. This modification occurs exclusively on glutamate residues and results in a glycine chain on the gamma-carboxyl group. Post-translationally, symmetrically methylated by PRMT5.

Its subcellular location is the nucleus. It is found in the nucleolus. It localises to the cytoplasm. Functionally, nucleolin is the major nucleolar protein of growing eukaryotic cells. It is found associated with intranucleolar chromatin and pre-ribosomal particles. It induces chromatin decondensation by binding to histone H1. It is thought to play a role in pre-rRNA transcription and ribosome assembly. May play a role in the process of transcriptional elongation. Binds RNA oligonucleotides with 5'-UUAGGG-3' repeats more tightly than the telomeric single-stranded DNA 5'-TTAGGG-3' repeats. This is Nucleolin (NCL) from Pongo abelii (Sumatran orangutan).